The chain runs to 366 residues: Inhibin alpha chain (366 aa).

The first 20 residues, 1–20 (MVSQRSLLLLLLLTLRDVDS), serve as a signal peptide directing secretion. A propeptide spanning residues 21 to 63 (CQGPELVRELVLAKVKALFLDALGPPAMDGEGGDPGIRRLPRR) is cleaved from the precursor. A propeptide spans 64–233 (HAVGGFMHRT…APSAGERARR (170 aa)) (inhibin alpha N-terminal region). 2 N-linked (GlcNAc...) asparagine glycosylation sites follow: Asn-147 and Asn-269. 3 disulfides stabilise this stretch: Cys-263/Cys-328, Cys-292/Cys-363, and Cys-296/Cys-365.

It belongs to the TGF-beta family. As to quaternary structure, dimeric, linked by one or more disulfide bonds. Activin B is a dimer of alpha and beta-B. Inhibin A is a dimer of alpha and beta-A. Inhibin B is a dimer of alpha and beta-B. Interacts with TGFBR3L; this interaction regulates female fertility. Post-translationally, proteolytic processing yields a number of bioactive forms, consisting either solely of the mature alpha chain, of the most N-terminal propeptide linked through a disulfide bond to the mature alpha chain, or of the entire proprotein.

Its subcellular location is the secreted. In terms of biological role, inhibins and activins inhibit and activate, respectively, the secretion of follitropin by the pituitary gland. Inhibins/activins are involved in regulating a number of diverse functions such as hypothalamic and pituitary hormone secretion, gonadal hormone secretion, germ cell development and maturation, erythroid differentiation, insulin secretion, nerve cell survival, embryonic axial development or bone growth, depending on their subunit composition. Inhibins appear to oppose the functions of activins. Inhibin A is a dimer of alpha/INHA and beta-A/INHBA that functions as a feedback regulator in the hypothalamic-pituitary-gonadal (HPG) axis. Inhibits the secretion of FSH from the anterior pituitary gland by acting on pituitary gonadotrope cells. Antagonizes activin A by binding to the proteoglycan, betaglycan, and forming a stable complex with and, thereby, sequestering type II activin receptors while excluding type I receptor. Its function is as follows. Inhibin B is a dimer of alpha and beta-B that plays a crucial role in the regulation of the reproductive system by inhibiting the secretion of follicle-stimulating hormone (FSH) from the anterior pituitary gland. Thereby, maintains reproductive homeostasis in both males and females. Acts as a more potent suppressor of FSH release than inhibin A. Functions as competitive receptor antagonist binding activin type II receptors with high affinity in the presence of the TGF-beta type III coreceptor/TGFBR3L. This Mus musculus (Mouse) protein is Inhibin alpha chain (Inha).